We begin with the raw amino-acid sequence, 435 residues long: UDP-N-acetylmuramate--L-alanine ligase (435 aa).

Position 108–114 (108–114) interacts with ATP; that stretch reads GSHGKTS.

It belongs to the MurCDEF family.

The protein resides in the cytoplasm. It catalyses the reaction UDP-N-acetyl-alpha-D-muramate + L-alanine + ATP = UDP-N-acetyl-alpha-D-muramoyl-L-alanine + ADP + phosphate + H(+). It participates in cell wall biogenesis; peptidoglycan biosynthesis. Cell wall formation. In Exiguobacterium sp. (strain ATCC BAA-1283 / AT1b), this protein is UDP-N-acetylmuramate--L-alanine ligase.